Here is an 83-residue protein sequence, read N- to C-terminus: Mu-theraphotoxin-Hhn2b 2 (83 aa).

A signal peptide spans 1-21; it reads MKASMFLALAGLVLLFVVCYA. A propeptide spanning residues 22–48 is cleaved from the precursor; that stretch reads SESEEKEFPRELISKIFTVDDFKGEER. 3 cysteine pairs are disulfide-bonded: cysteine 50/cysteine 65, cysteine 57/cysteine 70, and cysteine 64/cysteine 77. Leucine 81 is modified (leucine amide).

It belongs to the neurotoxin 10 (Hwtx-1) family. 14 (Hntx-1) subfamily. Monomer. In terms of tissue distribution, expressed by the venom gland.

It localises to the secreted. Its function is as follows. Weakly blocks the rat SCN2A/SCN1B (Nav1.2/beta-1) sodium channel (IC(50)=68 uM) and the insect sodium channel para/tipE (IC(50)=4.3 uM), without altering the activation or inactivation kinetics (depressant toxin). This Cyriopagopus hainanus (Chinese bird spider) protein is Mu-theraphotoxin-Hhn2b 2.